The sequence spans 400 residues: MAKLTVSDLDLKGKKVLMRVDFNVPIKDGVIGNDNRIVAALPTIKYVIEHGGKAILLSHLGRIKKEEDKPGLSMRPVAERLSNLLNKPVTFVPTTEGKQLEDAIDGLNDGDVLVMENTRYEDVKDGENVKRESGNDPELGKYWASLGDVFVNDAFGTAHRSHASNVGIASNMSQTAAGFLMEKEITFIGGAVDNPEHPFVAILGGAKVSDKIGVIDNLLAKADKILIGGGMTYTFYAAKGMKIGNSLVETDKIDLAKEILDKAGDKLVLPVDSVVAEKFDNDAPHKTVEGDVPDGYMALDIGPKSVAEFKDVLKDAKTVVWNGPMGVFEMSNYAEGTLEIGKFLGTLTNAKTIVGGGDSTAAVQQLGVADKLSHISTGGGASLEYLEGKTLPGIAAISDK.

Substrate contacts are provided by residues 21-23 (DFN), Arg-36, 59-62 (HLGR), Arg-119, and Arg-160. ATP contacts are provided by residues Lys-211, Glu-329, and 356-359 (GGDS).

Belongs to the phosphoglycerate kinase family. Monomer.

Its subcellular location is the cytoplasm. The catalysed reaction is (2R)-3-phosphoglycerate + ATP = (2R)-3-phospho-glyceroyl phosphate + ADP. It functions in the pathway carbohydrate degradation; glycolysis; pyruvate from D-glyceraldehyde 3-phosphate: step 2/5. This chain is Phosphoglycerate kinase, found in Levilactobacillus brevis (strain ATCC 367 / BCRC 12310 / CIP 105137 / JCM 1170 / LMG 11437 / NCIMB 947 / NCTC 947) (Lactobacillus brevis).